The primary structure comprises 596 residues: Elongation factor 4 (596 aa).

Positions 2–183 (NNIRNFSIIA…TIIRKIPPPK (182 aa)) constitute a tr-type G domain. GTP-binding positions include 14 to 19 (DHGKST) and 130 to 133 (NKID).

It belongs to the TRAFAC class translation factor GTPase superfamily. Classic translation factor GTPase family. LepA subfamily.

The protein localises to the cell inner membrane. The enzyme catalyses GTP + H2O = GDP + phosphate + H(+). In terms of biological role, required for accurate and efficient protein synthesis under certain stress conditions. May act as a fidelity factor of the translation reaction, by catalyzing a one-codon backward translocation of tRNAs on improperly translocated ribosomes. Back-translocation proceeds from a post-translocation (POST) complex to a pre-translocation (PRE) complex, thus giving elongation factor G a second chance to translocate the tRNAs correctly. Binds to ribosomes in a GTP-dependent manner. This is Elongation factor 4 from Campylobacter fetus subsp. fetus (strain 82-40).